The primary structure comprises 937 residues: MTDSKYFTTNKKGEIFELKAELNNEKKEKRKEAVKKVIAAMTVGKDVSSLFPDVVNCMQTDNLELKKLVYLYLMNYAKSQPDMAIMAVNSFVKDCEDPNPLIRALAVRTMGCIRVDKITEYLCEPLRKCLKDEDPYVRKTAAVCVAKLHDINAQMVEDQGFLDSLRDLIADSNPMVVANAVAALSEISESHPNSNLLDLNPQNINKLLTALNECTEWGQIFILDCLSNYNPKDDREAQSICERVTPRLSHANSAVVLSAVKVLMKFLELLPKDSDYYNMLLKKLAPPLVTLLSGEPEVQYVALRNINLIVQKRPEILKQEIKVFFVKYNDPIYVKLEKLDIMIRLASQANIAQVLAELKEYATEVDVDFVRKAVRAIGRCAIKVEQSAERCVSTLLDLIQTKVNYVVQEAIVVIRDIFRKYPNKYESIIATLCENLDSLDEPDARAAMIWIVGEYAERIDNADELLESFLEGFHDESTQVQLTLLTAIVKLFLKKPSETQELVQQVLSLATQDSDNPDLRDRGYIYWRLLSTDPVTAKEVVLSEKPLISEETDLIEPTLLDELICHIGSLASVYHKPPNAFVEGSHGIHRKHLPIHHGSTDAGDSPVGTTTATNLEQPQVIPSQGDLLGDLLNLDLGPPVNVPQVSSMQMGAVDLLGGGLDSLVGQSFIPSSVPATFAPSPTPAVVSSGLNDLFELSTGIGMAPGGYVAPKAVWLPAVKAKGLEISGTFTHRQGHIYMEMNFTNKALQHMTDFAIQFNKNSFGVIPSTPLAIHTPLMPNQSIDVSLPLNTLGPVMKMEPLNNLQVAVKNNIDVFYFSCLIPLNVLFVEDGKMERQVFLATWKDIPNENELQFQIKECHLNADTVSSKLQNNNVYTIAKRNVEGQDMLYQSLKLTNGIWILAELRIQPGNPNYTLSLKCRAPEVSQYIYQVYDSILKN.

The residue at position 2 (T2) is an N-acetylthreonine. At S4 the chain carries Phosphoserine. The residue at position 265 (K265) is an N6-acetyllysine. The residue at position 737 (Y737) is a Phosphotyrosine; by SRC. The tract at residues 841-937 (WKDIPNENEL…YQVYDSILKN (97 aa)) is interaction with ARRB1. Y928 carries the phosphotyrosine modification.

The protein belongs to the adaptor complexes large subunit family. As to quaternary structure, adaptor protein complex 2 (AP-2) is a heterotetramer composed of two large adaptins (alpha-type subunit AP2A1 or AP2A2 and beta-type subunit AP2B1), a medium adaptin (mu-type subunit AP2M1) and a small adaptin (sigma-type subunit AP2S1). Interacts with EPN1. Interacts with EPS15; clathrin competes with EPS15. Interacts with SNAP91; clathrin competes with SNAP91. Interacts with CLTC; clathrin competes with EPS15, SNAP91 and PIP5K1C. Interacts with LDLRAP1. Interacts with AMPH and BIN1. Interacts with ARF6 (GDP-bound). Interacts (dephosphorylated at Tyr-737) with ARRB1; phosphorylation of AP2B1 at Tyr-737 disrupts the interaction. Interacts with SLC2A8. Interacts with SCYL1 and SCYL2. Interacts with TGFBR1 and TGFBR2. Interacts with PIP5K1C; clathrin competes with PIP5K1C. Interacts with DENND1B, but not with DENND1A, nor DENND1C. Interacts with FCHO1. Interacts with RFTN1. Interacts with KIAA1107. Together with AP2A1 or AP2A2 and AP2M1, it interacts with ADAM10; this interaction facilitates ADAM10 endocytosis from the plasma membrane during long-term potentiation in hippocampal neurons. Post-translationally, phosphorylation at Tyr-737 by SRC occurs at the plasma membrane in clathrin-coated vesicles (CCVs). In terms of tissue distribution, expressed in the brain (at protein level).

It is found in the cell membrane. The protein localises to the membrane. Its subcellular location is the coated pit. Its function is as follows. Component of the adaptor protein complex 2 (AP-2). Adaptor protein complexes function in protein transport via transport vesicles in different membrane traffic pathways. Adaptor protein complexes are vesicle coat components and appear to be involved in cargo selection and vesicle formation. AP-2 is involved in clathrin-dependent endocytosis in which cargo proteins are incorporated into vesicles surrounded by clathrin (clathrin-coated vesicles, CCVs) which are destined for fusion with the early endosome. The clathrin lattice serves as a mechanical scaffold but is itself unable to bind directly to membrane components. Clathrin-associated adaptor protein (AP) complexes which can bind directly to both the clathrin lattice and to the lipid and protein components of membranes are considered to be the major clathrin adaptors contributing the CCV formation. AP-2 also serves as a cargo receptor to selectively sort the membrane proteins involved in receptor-mediated endocytosis. AP-2 seems to play a role in the recycling of synaptic vesicle membranes from the presynaptic surface. AP-2 recognizes Y-X-X-[FILMV] (Y-X-X-Phi) and [ED]-X-X-X-L-[LI] endocytosis signal motifs within the cytosolic tails of transmembrane cargo molecules. AP-2 may also play a role in maintaining normal post-endocytic trafficking through the ARF6-regulated, non-clathrin pathway. During long-term potentiation in hippocampal neurons, AP-2 is responsible for the endocytosis of ADAM10. The AP-2 beta subunit acts via its C-terminal appendage domain as a scaffolding platform for endocytic accessory proteins; at least some clathrin-associated sorting proteins (CLASPs) are recognized by their [DE]-X(1,2)-F-X-X-[FL]-X-X-X-R motif. The AP-2 beta subunit binds to clathrin heavy chain, promoting clathrin lattice assembly; clathrin displaces at least some CLASPs from AP2B1 which probably then can be positioned for further coat assembly. The chain is AP-2 complex subunit beta (AP2B1) from Homo sapiens (Human).